A 157-amino-acid chain; its full sequence is Ribosome maturation factor RimP (157 aa).

Belongs to the RimP family.

The protein resides in the cytoplasm. Required for maturation of 30S ribosomal subunits. The polypeptide is Ribosome maturation factor RimP (Thermosynechococcus vestitus (strain NIES-2133 / IAM M-273 / BP-1)).